A 137-amino-acid chain; its full sequence is Prefoldin subunit alpha (137 aa).

It belongs to the prefoldin subunit alpha family. As to quaternary structure, heterohexamer of two alpha and four beta subunits.

Its subcellular location is the cytoplasm. In terms of biological role, molecular chaperone capable of stabilizing a range of proteins. Seems to fulfill an ATP-independent, HSP70-like function in archaeal de novo protein folding. The sequence is that of Prefoldin subunit alpha (pfdA) from Archaeoglobus fulgidus (strain ATCC 49558 / DSM 4304 / JCM 9628 / NBRC 100126 / VC-16).